The sequence spans 970 residues: Protein tweety (970 aa).

Residues 1 to 47 (MGDYHEFTDQYKVPVIAKLLHALPHYNITFHKINSTFRPNDEIYLES) are Extracellular-facing. 2 N-linked (GlcNAc...) asparagine glycosylation sites follow: Asn-27 and Asn-34. The helical transmembrane segment at 48–68 (LGILGSVPAALLIVSLLGLLF) threads the bilayer. The Cytoplasmic segment spans residues 69-89 (YLMTRCCDRKPRPAHSITSLK). Residues 90–110 (VALSIVTVMCCAAIGLGLYGN) form a helical membrane-spanning segment. Residues 111–219 (DDLHNGLLEV…GDQWELIRWP (109 aa)) lie on the Extracellular side of the membrane. Residues Asn-136, Asn-166, and Asn-183 are each glycosylated (N-linked (GlcNAc...) asparagine). Residues 220 to 240 (GTVATLALLLVLCAVLLVGVA) traverse the membrane as a helical segment. The Cytoplasmic portion of the chain corresponds to 241-246 (RHSRCA). Residues 247–267 (LILFSVCGLLAVTGSWLMSGL) form a helical membrane-spanning segment. Topologically, residues 268 to 395 (YLSSSVAVGD…RGLCEGGLLG (128 aa)) are extracellular. Residue Asn-359 is glycosylated (N-linked (GlcNAc...) asparagine). A helical transmembrane segment spans residues 396-416 (LVLMLIASFIAAILLTIMVWV). At 417–970 (DSHTWIYIRK…DESNYAVTEL (554 aa)) the chain is on the cytoplasmic side. The segment covering 532 to 571 (NAAANMPPTTQAAQQQQQQQAQQQQQQAQQQLGGPQPIYC) has biased composition (low complexity). Disordered regions lie at residues 532–587 (NAAA…QHPH), 677–763 (RQNS…NESD), and 849–970 (MKAI…VTEL). Residues 572-587 (HHPHQHPHPHPHQHPH) are compositionally biased toward basic residues. 3 stretches are compositionally biased toward low complexity: residues 689-700 (HQHPPSLHQQQQ), 707-737 (QQQQ…QQHH), and 745-759 (QHQQ…QQQP). Positions 852–868 (IPPPRIGTPTSPPPPVA) are enriched in pro residues. 2 stretches are compositionally biased toward gly residues: residues 883–894 (QNGGAVVGGGGA) and 931–945 (NGGG…GGGA). Polar residues predominate over residues 961–970 (DESNYAVTEL).

The protein belongs to the tweety family.

The protein resides in the cell membrane. In terms of biological role, non-essential protein that probably acts as a chloride channel. This Drosophila melanogaster (Fruit fly) protein is Protein tweety (tty).